The chain runs to 465 residues: UDP-N-acetylmuramate--L-alanine ligase (465 aa).

114 to 120 (GAHGKTT) contacts ATP.

Belongs to the MurCDEF family.

The protein localises to the cytoplasm. The enzyme catalyses UDP-N-acetyl-alpha-D-muramate + L-alanine + ATP = UDP-N-acetyl-alpha-D-muramoyl-L-alanine + ADP + phosphate + H(+). Its pathway is cell wall biogenesis; peptidoglycan biosynthesis. Cell wall formation. The chain is UDP-N-acetylmuramate--L-alanine ligase from Syntrophomonas wolfei subsp. wolfei (strain DSM 2245B / Goettingen).